Reading from the N-terminus, the 335-residue chain is Mycobacterial beta-ketoacyl-[acyl-carrier-protein] synthase III (335 aa).

Residues cysteine 122 and histidine 258 contribute to the active site. Positions 259-263 (QANSR) are ACP-binding. Residue asparagine 289 is part of the active site.

This sequence belongs to the thiolase-like superfamily. FabH family. Homodimer.

It is found in the cytoplasm. The enzyme catalyses malonyl-[ACP] + dodecanoyl-CoA + H(+) = 3-oxotetradecanoyl-[ACP] + CO2 + CoA. The protein operates within lipid metabolism; fatty acid biosynthesis. It participates in lipid metabolism; mycolic acid biosynthesis. Catalyzes the condensation reaction of fatty acid synthesis by the addition to an acyl acceptor of two carbons from malonyl-ACP. Catalyzes the first condensation reaction which initiates fatty acid synthesis and may therefore play a role in governing the total rate of fatty acid production. Possesses both acetoacetyl-ACP synthase and acetyl transacylase activities. Its substrate specificity determines the biosynthesis of branched-chain and/or straight-chain of fatty acids. The chain is Mycobacterial beta-ketoacyl-[acyl-carrier-protein] synthase III from Mycobacterium ulcerans (strain Agy99).